The sequence spans 625 residues: Phosphomethylpyrimidine synthase (625 aa).

Substrate contacts are provided by residues N230, M259, Y288, H324, 344–346, 385–388, and E424; these read SRG and DGLR. Position 428 (H428) interacts with Zn(2+). Residue Y451 coordinates substrate. H492 is a Zn(2+) binding site. C572, C575, and C580 together coordinate [4Fe-4S] cluster.

The protein belongs to the ThiC family. In terms of assembly, homodimer. Requires [4Fe-4S] cluster as cofactor.

The catalysed reaction is 5-amino-1-(5-phospho-beta-D-ribosyl)imidazole + S-adenosyl-L-methionine = 4-amino-2-methyl-5-(phosphooxymethyl)pyrimidine + CO + 5'-deoxyadenosine + formate + L-methionine + 3 H(+). It participates in cofactor biosynthesis; thiamine diphosphate biosynthesis. Its function is as follows. Catalyzes the synthesis of the hydroxymethylpyrimidine phosphate (HMP-P) moiety of thiamine from aminoimidazole ribotide (AIR) in a radical S-adenosyl-L-methionine (SAM)-dependent reaction. The protein is Phosphomethylpyrimidine synthase of Xanthomonas axonopodis pv. citri (strain 306).